Here is a 170-residue protein sequence, read N- to C-terminus: Cytochrome c-type biogenesis protein CcmE (170 aa).

Residues 1–7 (MTRKKRR) lie on the Cytoplasmic side of the membrane. Residues 8–28 (LILIAACGSVLALAVGLILYA) traverse the membrane as a helical; Signal-anchor for type II membrane protein segment. At 29–170 (MSGSIVFFRS…DSTLGPRSER (142 aa)) the chain is on the periplasmic side. Heme is bound by residues His122 and Tyr126. The disordered stretch occupies residues 132 to 170 (ADALKAQGRWQEGGPNRGGPAPKPATAAADSTLGPRSER).

This sequence belongs to the CcmE/CycJ family.

It is found in the cell inner membrane. In terms of biological role, heme chaperone required for the biogenesis of c-type cytochromes. Transiently binds heme delivered by CcmC and transfers the heme to apo-cytochromes in a process facilitated by CcmF and CcmH. This is Cytochrome c-type biogenesis protein CcmE from Methylobacterium radiotolerans (strain ATCC 27329 / DSM 1819 / JCM 2831 / NBRC 15690 / NCIMB 10815 / 0-1).